Consider the following 456-residue polypeptide: Enolase (456 aa).

Gln-169 provides a ligand contact to (2R)-2-phosphoglycerate. The active-site Proton donor is Glu-211. The Mg(2+) site is built by Asp-252, Glu-314, and Asp-341. (2R)-2-phosphoglycerate-binding residues include Lys-366, Arg-395, Ser-396, and Lys-417. The Proton acceptor role is filled by Lys-366.

It belongs to the enolase family. Mg(2+) serves as cofactor.

Its subcellular location is the cytoplasm. It localises to the secreted. The protein localises to the cell surface. It catalyses the reaction (2R)-2-phosphoglycerate = phosphoenolpyruvate + H2O. It functions in the pathway carbohydrate degradation; glycolysis; pyruvate from D-glyceraldehyde 3-phosphate: step 4/5. In terms of biological role, catalyzes the reversible conversion of 2-phosphoglycerate (2-PG) into phosphoenolpyruvate (PEP). It is essential for the degradation of carbohydrates via glycolysis. This Metamycoplasma arthritidis (strain 158L3-1) (Mycoplasma arthritidis) protein is Enolase.